The primary structure comprises 230 residues: Ribosome biogenesis protein SLX9 homolog (230 aa).

A compositionally biased stretch (basic residues) spans 1–11 (MGKVRGLRARV). Disordered regions lie at residues 1 to 42 (MGKV…SAAG) and 155 to 187 (LGLE…AQRQ). A compositionally biased stretch (pro residues) spans 25–38 (GPAPPAPEATPPPA). Phosphothreonine is present on Thr-34. Basic and acidic residues predominate over residues 166-177 (RSRESNKPRPSE). A Phosphoserine modification is found at Ser-203.

This sequence belongs to the SLX9 family. In terms of tissue distribution, not detected in any tested tissue.

The protein resides in the nucleus. Its subcellular location is the nucleolus. In terms of biological role, may be involved in ribosome biogenesis. This Homo sapiens (Human) protein is Ribosome biogenesis protein SLX9 homolog.